A 314-amino-acid chain; its full sequence is Porphobilinogen deaminase (314 aa).

Cys249 carries the post-translational modification S-(dipyrrolylmethanemethyl)cysteine.

Belongs to the HMBS family. Monomer. It depends on dipyrromethane as a cofactor.

The catalysed reaction is 4 porphobilinogen + H2O = hydroxymethylbilane + 4 NH4(+). The protein operates within porphyrin-containing compound metabolism; protoporphyrin-IX biosynthesis; coproporphyrinogen-III from 5-aminolevulinate: step 2/4. Its function is as follows. Tetrapolymerization of the monopyrrole PBG into the hydroxymethylbilane pre-uroporphyrinogen in several discrete steps. The chain is Porphobilinogen deaminase from Brucella abortus (strain S19).